Here is a 60-residue protein sequence, read N- to C-terminus: UPF0434 protein Ssed_2824 (60 aa).

Belongs to the UPF0434 family.

In Shewanella sediminis (strain HAW-EB3), this protein is UPF0434 protein Ssed_2824.